We begin with the raw amino-acid sequence, 280 residues long: Dehydrogenase/reductase SDR family member 2, mitochondrial (280 aa).

Residues 1–23 (MLSAVARGYQGWFHPCARLSVRM) constitute a mitochondrion transit peptide. Positions 46 and 48 each coordinate NAD(+). Lysine 96 bears the N6-acetyllysine; alternate mark. Lysine 96 carries the post-translational modification N6-succinyllysine; alternate. Serine 172 serves as a coordination point for substrate. NAD(+) is bound by residues tyrosine 185 and lysine 189. Residue tyrosine 185 is the Proton acceptor of the active site. At lysine 219 the chain carries N6-acetyllysine; alternate. Lysine 219 is modified (N6-succinyllysine; alternate). Residue threonine 220 coordinates NAD(+). The residue at position 223 (serine 223) is a Phosphoserine. Lysine 237 is subject to N6-succinyllysine.

This sequence belongs to the short-chain dehydrogenases/reductases (SDR) family. As to quaternary structure, directly interacts with MDM2; this interaction occurs in the nucleus and does not target DHRS2 to degradation. In terms of tissue distribution, widely expressed, with highest levels in liver and kidney, followed by heart, spleen, skeletal muscle and placenta. In hemopoietic cells, expressed in dendritic cells, but not in monocytes, macrophages, granulocytes, nor in B and T lymphocytes.

It localises to the mitochondrion matrix. The protein resides in the nucleus. In terms of biological role, NADPH-dependent oxidoreductase which catalyzes the reduction of dicarbonyl compounds. Displays reductase activity in vitro with 3,4-hexanedione, 2,3-heptanedione and 1-phenyl-1,2-propanedione as substrates. May function as a dicarbonyl reductase in the enzymatic inactivation of reactive carbonyls involved in covalent modification of cellular components. Also displays a minor hydroxysteroid dehydrogenase activity toward bile acids such as ursodeoxycholic acid (UDCA) and isoursodeoxycholic acid (isoUDCA), which makes it unlikely to control hormone levels. Doesn't show any activity in vitro with retinoids and sugars as substrates. Attenuates MDM2-mediated p53/TP53 degradation, leading to p53/TP53 stabilization and increased transcription activity, resulting in the accumulation of MDM2 and CDKN1A/p21. Reduces proliferation, migration and invasion of cancer cells and well as the production of ROS in cancer. This Homo sapiens (Human) protein is Dehydrogenase/reductase SDR family member 2, mitochondrial.